The following is a 375-amino-acid chain: Growth/differentiation factor 8 (375 aa).

An N-terminal signal peptide occupies residues 1 to 23; sequence MQKLAVYVYIYLFVQISVDPVAL. Positions 24–266 are excised as a propeptide; it reads DGSSQPTENT…VTDTPKRSRR (243 aa). N-linked (GlcNAc...) asparagine glycosylation is present at Asn-71. 4 disulfides stabilise this stretch: Cys-272/Cys-282, Cys-281/Cys-340, Cys-309/Cys-372, and Cys-313/Cys-374.

This sequence belongs to the TGF-beta family. In terms of assembly, homodimer; disulfide-linked.

The protein resides in the secreted. In terms of biological role, acts specifically as a negative regulator of skeletal muscle growth. The protein is Growth/differentiation factor 8 (MSTN) of Excalfactoria chinensis (Blue-breasted quail).